A 261-amino-acid chain; its full sequence is Cobalt transport protein CbiM (261 aa).

An N-terminal signal peptide occupies residues 1-33; the sequence is MLRRVLASKRASLILMGMLSFYIIVSASAPAYA. 7 helical membrane passes run 41 to 61, 76 to 96, 108 to 128, 140 to 160, 172 to 192, 197 to 217, and 220 to 240; these read LPAG…LLGV, LLLA…LPSV, LGSV…VLLF, TLGA…YWIY, IAIF…TSVQ, FPAP…IFAI, and IPLA…LQSY.

Belongs to the CbiM family. In terms of assembly, forms an energy-coupling factor (ECF) transporter complex composed of an ATP-binding protein (A component, CbiO), a transmembrane protein (T component, CbiQ) and 2 possible substrate-capture proteins (S components, CbiM and CbiN) of unknown stoichimetry.

It localises to the cell inner membrane. Its pathway is cofactor biosynthesis; adenosylcobalamin biosynthesis. In terms of biological role, part of the energy-coupling factor (ECF) transporter complex CbiMNOQ involved in cobalt import. The chain is Cobalt transport protein CbiM from Nostoc sp. (strain PCC 7120 / SAG 25.82 / UTEX 2576).